We begin with the raw amino-acid sequence, 204 residues long: ATP-dependent Clp protease proteolytic subunit 1 (204 aa).

S97 functions as the Nucleophile in the catalytic mechanism. H122 is a catalytic residue.

Belongs to the peptidase S14 family. Fourteen ClpP subunits assemble into 2 heptameric rings which stack back to back to give a disk-like structure with a central cavity, resembling the structure of eukaryotic proteasomes.

It is found in the cytoplasm. The enzyme catalyses Hydrolysis of proteins to small peptides in the presence of ATP and magnesium. alpha-casein is the usual test substrate. In the absence of ATP, only oligopeptides shorter than five residues are hydrolyzed (such as succinyl-Leu-Tyr-|-NHMec, and Leu-Tyr-Leu-|-Tyr-Trp, in which cleavage of the -Tyr-|-Leu- and -Tyr-|-Trp bonds also occurs).. Its function is as follows. Cleaves peptides in various proteins in a process that requires ATP hydrolysis. Has a chymotrypsin-like activity. Plays a major role in the degradation of misfolded proteins. This is ATP-dependent Clp protease proteolytic subunit 1 from Nostoc sp. (strain PCC 7120 / SAG 25.82 / UTEX 2576).